The primary structure comprises 261 residues: Claudin-18 (261 aa).

Topologically, residues 1 to 6 are cytoplasmic; the sequence is MATTTC. The helical transmembrane segment at 7–27 threads the bilayer; sequence QVVGLLLSLLGLAGCIAATGM. Over 28 to 80 the chain is Extracellular; that stretch reads DMWSTQDLYDNPVTSVFQYEGLWRSCVQQSSGFTECRPYFTILGLPAMLQAVR. A helical transmembrane segment spans residues 81–101; sequence ALMIVGIVLGVIGILVSIFAL. Residues 102–122 are Cytoplasmic-facing; it reads KCIRIGSMDDSAKAKMTLTSG. The chain crosses the membrane as a helical span at residues 123–143; that stretch reads IMFIISGVCAIIGVSVFANML. The Extracellular portion of the chain corresponds to 144 to 173; that stretch reads VTNFWMSTANMYSGMGGMVQTVQTRYTFGA. The helical transmembrane segment at 174-194 threads the bilayer; the sequence is ALFVGWIAGGLTLIGGVMMCI. At 195-261 the chain is on the cytoplasmic side; the sequence is ACRGLTPDDR…QSHPTKYDYV (67 aa). The segment at 195 to 261 is required for role in regulation of RANKL-induced osteoclast differentiation; the sequence is ACRGLTPDDR…QSHPTKYDYV (67 aa). Residue serine 214 is modified to Phosphoserine. The disordered stretch occupies residues 242-261; the sequence is DGGARTEDDEQSHPTKYDYV.

The protein belongs to the claudin family. Interacts with TJP2/ZO-2. Interacts with TJP1/ZO-1. Interacts with YAP1 (phosphorylated); the interaction sequesters YAP1 away from the nucleus and thereby restricts transcription of YAP1 target genes. Interacts with CLDN19. In terms of tissue distribution, expressed in the lung (at protein level).

It is found in the cell junction. It localises to the tight junction. The protein localises to the cell membrane. In terms of biological role, involved in alveolar fluid homeostasis via regulation of alveolar epithelial tight junction composition and therefore ion transport and solute permeability, potentially via downstream regulation of the actin cytoskeleton organization and beta-2-adrenergic signaling. Required for lung alveolarization and maintenance of the paracellular alveolar epithelial barrier. Acts to maintain epithelial progenitor cell proliferation and organ size, via regulation of YAP1 localization away from the nucleus and thereby restriction of YAP1 target gene transcription. Acts as a negative regulator of RANKL-induced osteoclast differentiation, potentially via relocation of TJP2/ZO-2 away from the nucleus, subsequently involved in bone resorption in response to calcium deficiency. Mediates the osteoprotective effects of estrogen, potentially via acting downstream of estrogen signaling independently of RANKL signaling pathways. Required for the formation of the gastric paracellular barrier via its role in tight junction formation, thereby involved in the response to gastric acidification. The sequence is that of Claudin-18 from Rattus norvegicus (Rat).